Reading from the N-terminus, the 151-residue chain is Myosin light polypeptide 6 (151 aa).

Cys-2 is subject to N-acetylcysteine. The region spanning 7 to 42 (DQTAEFKEAFQLFDRTGDGKILYSQCGDVMRALGQN) is the EF-hand 1 domain. Ser-57 bears the Phosphoserine mark. Lys-81 carries the post-translational modification N6-acetyllysine. Positions 84 to 119 (GTYEDYVEGLRVFDKEGNGTVMGAEIRHVLVTLGEK) constitute an EF-hand 2 domain.

In terms of assembly, myosin is a hexamer of 2 heavy chains and 4 light chains. Interacts with SPATA6.

In terms of biological role, regulatory light chain of myosin. Does not bind calcium. The sequence is that of Myosin light polypeptide 6 (MYL6) from Bos taurus (Bovine).